A 452-amino-acid chain; its full sequence is Methionine aminopeptidase 2-1 (452 aa).

Residues 1-100 (MAAKVADDVA…VRIDEVFPND (100 aa)) are disordered. Acidic residues predominate over residues 37 to 51 (EHDDSDDDNEAEDGA). Basic residues predominate over residues 60–73 (KKKKKRKPRKKKKA). Histidine 205 lines the substrate pocket. Aspartate 225, aspartate 236, and histidine 305 together coordinate a divalent metal cation. Histidine 313 serves as a coordination point for substrate. Residues glutamate 338 and glutamate 433 each contribute to the a divalent metal cation site.

Belongs to the peptidase M24A family. Methionine aminopeptidase eukaryotic type 2 subfamily. Requires Co(2+) as cofactor. It depends on Zn(2+) as a cofactor. Mn(2+) is required as a cofactor. Fe(2+) serves as cofactor.

The protein localises to the cytoplasm. The enzyme catalyses Release of N-terminal amino acids, preferentially methionine, from peptides and arylamides.. Cotranslationally removes the N-terminal methionine from nascent proteins. The N-terminal methionine is often cleaved when the second residue in the primary sequence is small and uncharged (Met-Ala-, Cys, Gly, Pro, Ser, Thr, or Val). The sequence is that of Methionine aminopeptidase 2-1 from Pyrenophora teres f. teres (strain 0-1) (Barley net blotch fungus).